Reading from the N-terminus, the 336-residue chain is Cell division protein ZipA (336 aa).

Topologically, residues 1–2 (ME) are periplasmic. A helical membrane pass occupies residues 3 to 23 (LHILFFILAGLLIAVLIGFSL). Residues 24 to 336 (WSARREKSRI…SRQSYLARVS (313 aa)) lie on the Cytoplasmic side of the membrane. A disordered region spans residues 57-76 (SLNPQSYAQTTGQHGETEAD). Polar residues predominate over residues 59 to 70 (NPQSYAQTTGQH).

The protein belongs to the ZipA family. As to quaternary structure, interacts with FtsZ via their C-terminal domains.

The protein resides in the cell inner membrane. Its function is as follows. Essential cell division protein that stabilizes the FtsZ protofilaments by cross-linking them and that serves as a cytoplasmic membrane anchor for the Z ring. Also required for the recruitment to the septal ring of downstream cell division proteins. The sequence is that of Cell division protein ZipA from Actinobacillus pleuropneumoniae serotype 7 (strain AP76).